A 1919-amino-acid polypeptide reads, in one-letter code: Disks large homolog 5 (1919 aa).

The segment at 98 to 142 is disordered; it reads AEGAGSTYSVLSTMPSDSESSSSLSSVGTTGKAPSPPPLLTDQQV. Residues 109–123 show a composition bias toward low complexity; sequence STMPSDSESSSSLSS. Phosphoserine occurs at positions 264 and 295. The stretch at 383 to 599 forms a coiled coil; the sequence is LNKATAQNKD…LEKEARFRQL (217 aa). 2 consecutive PDZ domains span residues 620–710 and 705–796; these read VVEF…RRRK and VVRR…LKVF. Ser900 carries the post-translational modification Phosphoserine. Disordered regions lie at residues 927–1122, 1150–1187, 1201–1230, 1245–1264, and 1271–1306; these read GVGE…FRPK, QEWA…PSTT, SHRV…HQGR, EMRA…LGSS, and AERI…PQSP. Thr984 is subject to Phosphothreonine. Ser1000 is subject to Phosphoserine. Thr1011 is subject to Phosphothreonine. Residues 1017 to 1030 show a composition bias toward basic and acidic residues; the sequence is RRSDSIKFQHRLET. Ser1021 is subject to Phosphoserine. Over residues 1045-1055 the composition is skewed to pro residues; that stretch reads TSPPSALPPDV. Phosphothreonine is present on Thr1183. A phosphoserine mark is found at Ser1209 and Ser1263. 2 stretches are compositionally biased toward low complexity: residues 1252 to 1264 and 1284 to 1298; these read SNSL…LGSS and RSVV…SHSE. At Ser1334 the chain carries Phosphoserine. The 80-residue stretch at 1350-1429 folds into the PDZ 3 domain; that stretch reads HVKVQKGSEP…TITILAQYNP (80 aa). A disordered region spans residues 1434-1493; that stretch reads LSSHSRSSSHLDPAGTHSTLQGSGTTTPEHPSVIDPLMEQDEGPSTPPAKQSSSRIAGDA. A compositionally biased stretch (polar residues) spans 1449-1462; the sequence is THSTLQGSGTTTPE. Residues 1501 to 1582 form the PDZ 4 domain; it reads RVVFIKKSQL…GVRLKVQYRP (82 aa). An SH3 domain is found at 1593-1661; the sequence is GDSFYIRALY…PSKYVMDQEF (69 aa). Phosphoserine is present on Ser1666. The region spanning 1722–1905 is the Guanylate kinase-like domain; it reads DSVSLAYQRV…ICTQILAMVN (184 aa).

Belongs to the MAGUK family. Interacts with MPP1. Interacts with CTNNB1 and with the third SH3 domain of SORBS3 to form a ternary complex. Interacts (via coiled-coil domain) with MARK3. Interacts (via PDZ domain 3) with STK3/MST2 and STK4/MST1. Interacts with SCRIB. Interacts with CTNB1, SMO and (via PDZ4 or guanylate kinase-like domain) with KIF7. In terms of tissue distribution, highly expressed in normal breast tissues and low-grade breast cancer tissues (at protein level). Highly expressed in the placenta and prostate. Expressed at a lower level in the thyroid, spinal cord, trachea, adrenal gland, skeletal muscle, pancreas, heart, brain, liver and kidney. A short splice product shows more limited expression, being absent from at least the brain.

Its subcellular location is the cell junction. It is found in the cell membrane. The protein localises to the postsynaptic density. It localises to the cytoplasm. The protein resides in the cytoskeleton. Its subcellular location is the cilium basal body. In terms of biological role, acts as a regulator of the Hippo signaling pathway. Negatively regulates the Hippo signaling pathway by mediating the interaction of MARK3 with STK3/4, bringing them together to promote MARK3-dependent hyperphosphorylation and inactivation of STK3 kinase activity toward LATS1. Positively regulates the Hippo signaling pathway by mediating the interaction of SCRIB with STK4/MST1 and LATS1 which is important for the activation of the Hippo signaling pathway. Involved in regulating cell proliferation, maintenance of epithelial polarity, epithelial-mesenchymal transition (EMT), cell migration and invasion. Plays an important role in dendritic spine formation and synaptogenesis in cortical neurons; regulates synaptogenesis by enhancing the cell surface localization of N-cadherin. Acts as a positive regulator of hedgehog (Hh) signaling pathway. Plays a critical role in the early point of the SMO activity cycle by interacting with SMO at the ciliary base to induce the accumulation of KIF7 and GLI2 at the ciliary tip for GLI2 activation. The protein is Disks large homolog 5 (DLG5) of Homo sapiens (Human).